Here is a 321-residue protein sequence, read N- to C-terminus: Cytochrome f (321 aa).

An N-terminal signal peptide occupies residues 1-38 (MINLFLLKYKTAFSTFLKPFAYLSLILSVCFYSIQAQA). Residues Phe39, Cys59, Cys62, and His63 each coordinate heme. A helical membrane pass occupies residues 287–306 (VKGLIAFFFTVILAQILLVL).

Belongs to the cytochrome f family. The 4 large subunits of the cytochrome b6-f complex are cytochrome b6, subunit IV (17 kDa polypeptide, petD), cytochrome f and the Rieske protein, while the 4 small subunits are PetG, PetL, PetM and PetN. The complex functions as a dimer. The cofactor is heme.

Its subcellular location is the plastid. It is found in the chloroplast thylakoid membrane. Component of the cytochrome b6-f complex, which mediates electron transfer between photosystem II (PSII) and photosystem I (PSI), cyclic electron flow around PSI, and state transitions. This chain is Cytochrome f (petA), found in Guillardia theta (Cryptophyte).